The following is a 272-amino-acid chain: HMP-PP phosphatase (272 aa).

Asp-8 serves as the catalytic Nucleophile. Mg(2+) is bound by residues Asp-8, Asp-10, and Asp-212.

Belongs to the HAD-like hydrolase superfamily. Cof family. It depends on Mg(2+) as a cofactor.

It carries out the reaction 4-amino-2-methyl-5-(diphosphooxymethyl)pyrimidine + H2O = 4-amino-2-methyl-5-(phosphooxymethyl)pyrimidine + phosphate + H(+). In terms of biological role, catalyzes the hydrolysis of 4-amino-2-methyl-5-hydroxymethylpyrimidine pyrophosphate (HMP-PP) to 4-amino-2-methyl-5-hydroxymethylpyrimidine phosphate (HMP-P). In Cronobacter sakazakii (strain ATCC BAA-894) (Enterobacter sakazakii), this protein is HMP-PP phosphatase.